The chain runs to 340 residues: Holliday junction branch migration complex subunit RuvB (340 aa).

The segment at 1-184 (MNENLDPTTK…FGISSRLQYY (184 aa)) is large ATPase domain (RuvB-L). Residues leucine 23, arginine 24, glycine 65, lysine 68, threonine 69, threonine 70, 131–133 (EDF), arginine 174, tyrosine 184, and arginine 221 each bind ATP. Threonine 69 serves as a coordination point for Mg(2+). The segment at 185–255 (STELLTTIVE…ISKYALKALN (71 aa)) is small ATPAse domain (RuvB-S). A head domain (RuvB-H) region spans residues 258–340 (AHGLDEMDNK…INTNIQGGLF (83 aa)). Residues arginine 313 and arginine 318 each coordinate DNA.

Belongs to the RuvB family. As to quaternary structure, homohexamer. Forms an RuvA(8)-RuvB(12)-Holliday junction (HJ) complex. HJ DNA is sandwiched between 2 RuvA tetramers; dsDNA enters through RuvA and exits via RuvB. An RuvB hexamer assembles on each DNA strand where it exits the tetramer. Each RuvB hexamer is contacted by two RuvA subunits (via domain III) on 2 adjacent RuvB subunits; this complex drives branch migration. In the full resolvosome a probable DNA-RuvA(4)-RuvB(12)-RuvC(2) complex forms which resolves the HJ.

The protein resides in the cytoplasm. It catalyses the reaction ATP + H2O = ADP + phosphate + H(+). Functionally, the RuvA-RuvB-RuvC complex processes Holliday junction (HJ) DNA during genetic recombination and DNA repair, while the RuvA-RuvB complex plays an important role in the rescue of blocked DNA replication forks via replication fork reversal (RFR). RuvA specifically binds to HJ cruciform DNA, conferring on it an open structure. The RuvB hexamer acts as an ATP-dependent pump, pulling dsDNA into and through the RuvAB complex. RuvB forms 2 homohexamers on either side of HJ DNA bound by 1 or 2 RuvA tetramers; 4 subunits per hexamer contact DNA at a time. Coordinated motions by a converter formed by DNA-disengaged RuvB subunits stimulates ATP hydrolysis and nucleotide exchange. Immobilization of the converter enables RuvB to convert the ATP-contained energy into a lever motion, pulling 2 nucleotides of DNA out of the RuvA tetramer per ATP hydrolyzed, thus driving DNA branch migration. The RuvB motors rotate together with the DNA substrate, which together with the progressing nucleotide cycle form the mechanistic basis for DNA recombination by continuous HJ branch migration. Branch migration allows RuvC to scan DNA until it finds its consensus sequence, where it cleaves and resolves cruciform DNA. This is Holliday junction branch migration complex subunit RuvB from Flavobacterium johnsoniae (strain ATCC 17061 / DSM 2064 / JCM 8514 / BCRC 14874 / CCUG 350202 / NBRC 14942 / NCIMB 11054 / UW101) (Cytophaga johnsonae).